Consider the following 453-residue polypeptide: Putative sodium-coupled neutral amino acid transporter 11 (453 aa).

Polar residues predominate over residues 1 to 10; the sequence is MSYQQPQLSG. The interval 1-34 is disordered; sequence MSYQQPQLSGPLQRETDSSDRESLISGHEHGGKS. Basic and acidic residues predominate over residues 14–32; that stretch reads RETDSSDRESLISGHEHGG. 11 consecutive transmembrane segments (helical) span residues 39 to 59, 66 to 86, 106 to 126, 150 to 170, 179 to 199, 222 to 242, 262 to 282, 299 to 319, 337 to 357, 359 to 379, and 398 to 418; these read AVFNVVNSVIGSGIIGLPYSM, LGILLLFLVSYITDFSLVLLI, GFPGYLLLSTLQFMYPFIAMI, GWFISRHFIIVVSTVTCTLPL, LGKISFISTILTTVILGIVMT, AIQAIGVMSFAFICHHNCFLV, ILVSVFICVLFATCGYFTFTG, VTFGRFCYGITVILTYPIECF, VFHTVLAVLIVTAATLVSLMI, CLGIVLELNGVLCAAPLIFII, and IMACVMFPVGAVVMVVGFVMA. 2 N-linked (GlcNAc...) asparagine glycosylation sites follow: N438 and N443.

This sequence belongs to the amino acid/polyamine transporter 2 family.

The protein resides in the membrane. Its function is as follows. Putative sodium-dependent amino acid/proton antiporter. The polypeptide is Putative sodium-coupled neutral amino acid transporter 11 (Slc38a11) (Mus musculus (Mouse)).